The sequence spans 435 residues: AP-2 complex subunit mu (435 aa).

Positions 170-434 (RNELFLDVLE…IGRSGIYETR (265 aa)) constitute an MHD domain. A 1,2-diacyl-sn-glycero-3-phospho-(1D-myo-inositol-3,4,5-trisphosphate) is bound by residues Lys341, Lys345, and Lys354.

It belongs to the adaptor complexes medium subunit family. As to quaternary structure, adaptor protein complex 2 (AP-2) is a heterotetramer composed of two large adaptins (alpha-type subunit and beta-type subunit), a medium adaptin (mu-type subunit) and a small adaptin (sigma-type subunit).

It is found in the cell membrane. Its subcellular location is the membrane. It localises to the coated pit. Functionally, component of the adaptor complexes which link clathrin to receptors in coated vesicles. Clathrin-associated protein complexes are believed to interact with the cytoplasmic tails of membrane proteins, leading to their selection and concentration. AP50 is a subunit of the plasma membrane adaptor. The complex binds polyphosphoinositide-containing lipids. The polypeptide is AP-2 complex subunit mu (ap2m1) (Xenopus laevis (African clawed frog)).